The sequence spans 78 residues: Omega-conotoxin PnVIA (78 aa).

The signal sequence occupies residues 1 to 22; it reads MKLTCMMIIAVLFLTAWTFVMA. Positions 23-45 are excised as a propeptide; it reads DDPRDEPEARDEMNPAASKLNER. Intrachain disulfides connect Cys-47/Cys-65, Cys-54/Cys-69, and Cys-64/Cys-73. Position 76 is a glutamine amide (Gln-76).

In terms of tissue distribution, expressed by the venom duct.

Its subcellular location is the secreted. Omega-conotoxins act at presynaptic membranes, they bind and block voltage-gated calcium channels (Cav). Acts on high voltage-activated (HVA) calcium currents in molluscan neurons. In Conus pennaceus (Feathered cone), this protein is Omega-conotoxin PnVIA.